We begin with the raw amino-acid sequence, 180 residues long: Secreted RxLR effector protein 19 (180 aa).

Residues 1–19 (MKLLLRALATFVLLNGVDS) form the signal peptide. The Jacalin-type lectin domain occupies 25–171 (FQKCNVTGGP…IFALGALWGP (147 aa)). Positions 52–77 (RALRLCGVDFVDGIGVTIWDLSVEEN) match the RxLR-dEER motif.

The protein belongs to the RxLR effector family.

It is found in the secreted. The protein localises to the host cytoplasm. Its subcellular location is the host nucleus. Functionally, effector that partially suppresses the tobacco programmed cell death induced by cell death-inducing proteins. This is Secreted RxLR effector protein 19 from Plasmopara viticola (Downy mildew of grapevine).